The chain runs to 348 residues: Centromere protein N-A (348 aa).

It belongs to the CENP-N/CHL4 family.

The protein localises to the nucleus. It is found in the chromosome. Its subcellular location is the centromere. Probable component of a centromeric complex involved in assembly of kinetochore proteins, mitotic progression and chromosome segregation. This is Centromere protein N-A (cenpn-a) from Xenopus laevis (African clawed frog).